The sequence spans 251 residues: uncharacterized protein (251 aa).

The first 15 residues, 1–15 (MSAISSLVLIGWAMC), serve as a signal peptide directing secretion. N-linked (GlcNAc...) asparagine glycosylation is found at N225 and N242.

This is an uncharacterized protein from Encephalitozoon cuniculi (strain GB-M1) (Microsporidian parasite).